The chain runs to 632 residues: MSAILSADDLNDFISPGVACIKPIETLPAKPEDSSNPYEVTTEDKAAASQPPPPASISLTDCLACSGCVTSAEAVLVSLQSHSEVLTTLDTYRSLRAPWQTQNGTNGTNGTNGTTNGHSTNGTTTNGINGHSHEGKLFVASVSPQSRASIAAVFNVSEAEAGNMIAQLLSGPSGLKTGGHQGSDFTWVLDTNVVREACLVAAADEVANALSPETSNPSTKPGSEGAIDTTPKQPILTSACPGWICYAEKTHPYILPHLSRLKSPQALTGTLIKSVLSQQYNIPPSQIWHVAIMPCFDKKLEASRSELTSSAWLPNHDATQDPVRDVDCVITARELLHLASARGINFASLPRTPLSASERTPFPDPKLDAFLFPHTRRKNQDVVAGSSGGYLYHILQTYQAQNPGSSISVSRGRNADVVEYSLVRGSETIIRAARFYGFRNIQNLVRRLKPAKASRLPGGKTGVSRKPGAAAGGDVKDYAYVEVMACPGGCTNGGGQVKITEVEEVRAYEGVESTNGDTLAPKPGPKEQKEWLAKVDEAYFSGSDSEEEKVDQDGDQNMQDATTNGHTSEPDIVNGISRRKINDVVAHWSHLTGVDTQKLLYTSYRKVESDVGKKQSDMERVAGLAVTVGGGW.

Residue C20 coordinates [4Fe-4S] cluster. Residues L27–P53 form a disordered region. Positions 62, 65, and 68 each coordinate [4Fe-4S] cluster. Disordered regions lie at residues W99 to S119 and L210 to P231. Low complexity predominate over residues T101 to S119. Residues S211–P221 are compositionally biased toward polar residues. 4 residues coordinate [4Fe-4S] cluster: C240, C295, C486, and C490. Residues G542–V573 form a disordered region. Acidic residues predominate over residues D544 to G554. The segment covering D555 to T567 has biased composition (polar residues).

This sequence belongs to the NARF family.

In terms of biological role, component of the cytosolic Fe/S protein assembly machinery. Required for maturation of extramitochondrial Fe/S proteins. May play a role in the transfer of pre-assembled Fe/S clusters to target apoproteins. The protein is Cytosolic Fe-S cluster assembly factor NAR1 (NAR1) of Phaeosphaeria nodorum (strain SN15 / ATCC MYA-4574 / FGSC 10173) (Glume blotch fungus).